The primary structure comprises 423 residues: ATP-dependent RNA helicase RhlB (423 aa).

The Q motif motif lies at 9 to 37; sequence LRFSDLPLHHQVLAALQEKGFDYCTPIQA. One can recognise a Helicase ATP-binding domain in the interval 40-217; that stretch reads LPMSLAGKDV…FEDMNDPEYV (178 aa). Position 53–60 (53–60) interacts with ATP; the sequence is AQTGTGKT. The DEAD box motif lies at 163 to 166; that stretch reads DEAD. The region spanning 241 to 388 is the Helicase C-terminal domain; sequence KMALLLTLLE…VSQYDVAALL (148 aa). The tract at residues 397–423 is disordered; sequence KRGNNNSKNSANSNRTFQKKRSLKRNF. Residues 400-410 show a composition bias toward low complexity; sequence NNNSKNSANSN. The segment covering 413–423 has biased composition (basic residues); the sequence is FQKKRSLKRNF.

Belongs to the DEAD box helicase family. RhlB subfamily. As to quaternary structure, component of the RNA degradosome, which is a multiprotein complex involved in RNA processing and mRNA degradation.

The protein localises to the cytoplasm. It carries out the reaction ATP + H2O = ADP + phosphate + H(+). Functionally, DEAD-box RNA helicase involved in RNA degradation. Has RNA-dependent ATPase activity and unwinds double-stranded RNA. In Pasteurella multocida (strain Pm70), this protein is ATP-dependent RNA helicase RhlB.